Here is a 101-residue protein sequence, read N- to C-terminus: Small ribosomal subunit protein uS14 (101 aa).

The segment covering 1–10 (MAKKSSIEKN) has biased composition (basic and acidic residues). Residues 1 to 24 (MAKKSSIEKNNRRKRLTKNAAPKR) are disordered. Positions 11-24 (NRRKRLTKNAAPKR) are enriched in basic residues.

The protein belongs to the universal ribosomal protein uS14 family. As to quaternary structure, part of the 30S ribosomal subunit. Contacts proteins S3 and S10.

Functionally, binds 16S rRNA, required for the assembly of 30S particles and may also be responsible for determining the conformation of the 16S rRNA at the A site. In Rhodopseudomonas palustris (strain BisB18), this protein is Small ribosomal subunit protein uS14.